A 261-amino-acid chain; its full sequence is Ribosomal RNA small subunit methyltransferase A (261 aa).

Residues H12, L14, G39, E60, D81, and N104 each coordinate S-adenosyl-L-methionine.

The protein belongs to the class I-like SAM-binding methyltransferase superfamily. rRNA adenine N(6)-methyltransferase family. RsmA subfamily.

The protein localises to the cytoplasm. The enzyme catalyses adenosine(1518)/adenosine(1519) in 16S rRNA + 4 S-adenosyl-L-methionine = N(6)-dimethyladenosine(1518)/N(6)-dimethyladenosine(1519) in 16S rRNA + 4 S-adenosyl-L-homocysteine + 4 H(+). Specifically dimethylates two adjacent adenosines (A1518 and A1519) in the loop of a conserved hairpin near the 3'-end of 16S rRNA in the 30S particle. May play a critical role in biogenesis of 30S subunits. This is Ribosomal RNA small subunit methyltransferase A from Albidiferax ferrireducens (strain ATCC BAA-621 / DSM 15236 / T118) (Rhodoferax ferrireducens).